The chain runs to 304 residues: Coenzyme PQQ synthesis protein B (304 aa).

It belongs to the PqqB family.

Its pathway is cofactor biosynthesis; pyrroloquinoline quinone biosynthesis. May be involved in the transport of PQQ or its precursor to the periplasm. The sequence is that of Coenzyme PQQ synthesis protein B from Pseudomonas paraeruginosa (strain DSM 24068 / PA7) (Pseudomonas aeruginosa (strain PA7)).